Reading from the N-terminus, the 151-residue chain is Ribosome maturation factor RimP (151 aa).

It belongs to the RimP family.

It is found in the cytoplasm. In terms of biological role, required for maturation of 30S ribosomal subunits. The polypeptide is Ribosome maturation factor RimP (Synechocystis sp. (strain ATCC 27184 / PCC 6803 / Kazusa)).